The primary structure comprises 249 residues: Aquaporin SIP2-1 (249 aa).

2 consecutive transmembrane segments (helical) span residues 12–32 (PWLV…GALV) and 53–73 (VSLS…SGGA). The NPA 1 motif lies at 76 to 78 (NPL). 4 helical membrane passes run 104–124 (AQVI…PNVG), 133–155 (AHHG…VTLK), 176–196 (IHLL…AFAW), and 210–230 (LVYW…VTFF). The short motif at 189-191 (NPA) is the NPA 2 element.

Belongs to the MIP/aquaporin (TC 1.A.8) family. SIP (TC 1.A.8.10) subfamily.

The protein resides in the membrane. Aquaporins facilitate the transport of water and small neutral solutes across cell membranes. The protein is Aquaporin SIP2-1 (SIP2-1) of Zea mays (Maize).